We begin with the raw amino-acid sequence, 193 residues long: NADH-quinone oxidoreductase subunit B (193 aa).

Residues cysteine 72, cysteine 73, cysteine 137, and cysteine 167 each coordinate [4Fe-4S] cluster.

It belongs to the complex I 20 kDa subunit family. As to quaternary structure, NDH-1 is composed of 14 different subunits. Subunits NuoB, C, D, E, F, and G constitute the peripheral sector of the complex. [4Fe-4S] cluster is required as a cofactor.

Its subcellular location is the cell inner membrane. The enzyme catalyses a quinone + NADH + 5 H(+)(in) = a quinol + NAD(+) + 4 H(+)(out). NDH-1 shuttles electrons from NADH, via FMN and iron-sulfur (Fe-S) centers, to quinones in the respiratory chain. The immediate electron acceptor for the enzyme in this species is believed to be ubiquinone. Couples the redox reaction to proton translocation (for every two electrons transferred, four hydrogen ions are translocated across the cytoplasmic membrane), and thus conserves the redox energy in a proton gradient. The polypeptide is NADH-quinone oxidoreductase subunit B (Phenylobacterium zucineum (strain HLK1)).